The primary structure comprises 602 residues: Elongation factor 4 (602 aa).

The tr-type G domain occupies 7–188; that stretch reads ENIRNFSIIA…AIVELIPPPK (182 aa). Residues 19–24 and 135–138 contribute to the GTP site; these read DHGKST and NKID.

The protein belongs to the TRAFAC class translation factor GTPase superfamily. Classic translation factor GTPase family. LepA subfamily.

It is found in the cell inner membrane. It carries out the reaction GTP + H2O = GDP + phosphate + H(+). In terms of biological role, required for accurate and efficient protein synthesis under certain stress conditions. May act as a fidelity factor of the translation reaction, by catalyzing a one-codon backward translocation of tRNAs on improperly translocated ribosomes. Back-translocation proceeds from a post-translocation (POST) complex to a pre-translocation (PRE) complex, thus giving elongation factor G a second chance to translocate the tRNAs correctly. Binds to ribosomes in a GTP-dependent manner. This chain is Elongation factor 4, found in Chlamydia abortus (strain DSM 27085 / S26/3) (Chlamydophila abortus).